We begin with the raw amino-acid sequence, 244 residues long: Small ribosomal subunit protein uS3 (244 aa).

Positions 39–107 constitute a KH type-2 domain; that stretch reads VREMLRKKLA…PAHINVTEVR (69 aa). The tract at residues 213–244 is disordered; the sequence is VGQEKQDDSPRNDRNDRGDRGDRPSRPAREAR. Positions 216–244 are enriched in basic and acidic residues; the sequence is EKQDDSPRNDRNDRGDRGDRPSRPAREAR.

Belongs to the universal ribosomal protein uS3 family. As to quaternary structure, part of the 30S ribosomal subunit. Forms a tight complex with proteins S10 and S14.

In terms of biological role, binds the lower part of the 30S subunit head. Binds mRNA in the 70S ribosome, positioning it for translation. The polypeptide is Small ribosomal subunit protein uS3 (Xanthomonas euvesicatoria pv. vesicatoria (strain 85-10) (Xanthomonas campestris pv. vesicatoria)).